We begin with the raw amino-acid sequence, 178 residues long: Ribosome maturation factor RimM (178 aa).

Residues 101–178 (EGEFYWYQLQ…EMRVDWDADF (78 aa)) enclose the PRC barrel domain.

Belongs to the RimM family. Binds ribosomal protein uS19.

The protein localises to the cytoplasm. Its function is as follows. An accessory protein needed during the final step in the assembly of 30S ribosomal subunit, possibly for assembly of the head region. Essential for efficient processing of 16S rRNA. May be needed both before and after RbfA during the maturation of 16S rRNA. It has affinity for free ribosomal 30S subunits but not for 70S ribosomes. In Ectopseudomonas mendocina (strain ymp) (Pseudomonas mendocina), this protein is Ribosome maturation factor RimM.